The chain runs to 210 residues: Thymidylate kinase (210 aa).

ATP is bound at residue 9–16 (GLEGAGKS).

The protein belongs to the thymidylate kinase family.

The catalysed reaction is dTMP + ATP = dTDP + ADP. Its function is as follows. Phosphorylation of dTMP to form dTDP in both de novo and salvage pathways of dTTP synthesis. This Aliivibrio salmonicida (strain LFI1238) (Vibrio salmonicida (strain LFI1238)) protein is Thymidylate kinase.